The sequence spans 692 residues: Protein artemis (692 aa).

Threonine 380 bears the Phosphothreonine mark. Serine 385 carries the phosphoserine modification. Disordered stretches follow at residues 503 to 555 (RLEN…DSQS) and 640 to 660 (STNADSQSSSDFEVPSTPEAE). The segment covering 507–520 (FPSSTEAGGSQSPK) has biased composition (polar residues). Low complexity predominate over residues 530 to 543 (THISSQNSSQSTHI). Polar residues-rich tracts occupy residues 544 to 555 (TEQGSQGWDSQS) and 640 to 650 (STNADSQSSSD). Serine 645 carries the phosphoserine; by ATM modification.

The protein belongs to the DNA repair metallo-beta-lactamase (DRMBL) family. In terms of assembly, interacts with LIG4; the interaction is direct. Interacts with ATM. Interacts with BRCA1. Interacts with PRKDC. Interacts with TP53BP1. Also exhibits ATM- and phosphorylation-dependent interaction with the MRN complex, composed of MRE11, RAD50, and NBN. In terms of processing, phosphorylation on undefined residues by PRKDC may stimulate endonucleolytic activity on 5' and 3' hairpins and overhangs. PRKDC must remain present, even after phosphorylation, for efficient hairpin opening. Also phosphorylated by ATM in response to ionizing radiation (IR) and by ATR in response to ultraviolet (UV) radiation.

It is found in the nucleus. In terms of biological role, required for V(D)J recombination, the process by which exons encoding the antigen-binding domains of immunoglobulins and T-cell receptor proteins are assembled from individual V, (D), and J gene segments. V(D)J recombination is initiated by the lymphoid specific RAG endonuclease complex, which generates site specific DNA double strand breaks (DSBs). These DSBs present two types of DNA end structures: hairpin sealed coding ends and phosphorylated blunt signal ends. These ends are independently repaired by the non homologous end joining (NHEJ) pathway to form coding and signal joints respectively. This protein exhibits single-strand specific 5'-3' exonuclease activity in isolation, and acquires endonucleolytic activity on 5' and 3' hairpins and overhangs when in a complex with PRKDC. The latter activity is required specifically for the resolution of closed hairpins prior to the formation of the coding joint. May also be required for the repair of complex DSBs induced by ionizing radiation, which require substantial end-processing prior to religation by NHEJ. The protein is Protein artemis (DCLRE1C) of Pongo abelii (Sumatran orangutan).